A 192-amino-acid polypeptide reads, in one-letter code: Peptidyl-tRNA hydrolase (192 aa).

Position 17 (H17) interacts with tRNA. H22 serves as the catalytic Proton acceptor. TRNA is bound by residues F68, N70, and N116.

It belongs to the PTH family. Monomer.

It localises to the cytoplasm. The enzyme catalyses an N-acyl-L-alpha-aminoacyl-tRNA + H2O = an N-acyl-L-amino acid + a tRNA + H(+). In terms of biological role, hydrolyzes ribosome-free peptidyl-tRNAs (with 1 or more amino acids incorporated), which drop off the ribosome during protein synthesis, or as a result of ribosome stalling. Functionally, catalyzes the release of premature peptidyl moieties from peptidyl-tRNA molecules trapped in stalled 50S ribosomal subunits, and thus maintains levels of free tRNAs and 50S ribosomes. This is Peptidyl-tRNA hydrolase from Stenotrophomonas maltophilia (strain R551-3).